The following is a 122-amino-acid chain: MGKLDKKQLIESLKEMTIVEIDEIIKAVEEAFGVTATPIVAAGAAGATQEAASEVSVKVTGYADNAKLAVLKLYREITGVGLMEAKTAVEKLPCVVKQDIKPEEAEELKKRFVEVGATVEVK.

Belongs to the bacterial ribosomal protein bL12 family. Homodimer. Part of the ribosomal stalk of the 50S ribosomal subunit. Forms a multimeric L10(L12)X complex, where L10 forms an elongated spine to which 2 to 4 L12 dimers bind in a sequential fashion. Binds GTP-bound translation factors.

Forms part of the ribosomal stalk which helps the ribosome interact with GTP-bound translation factors. Is thus essential for accurate translation. The sequence is that of Large ribosomal subunit protein bL12 from Mycoplasma genitalium (strain ATCC 33530 / DSM 19775 / NCTC 10195 / G37) (Mycoplasmoides genitalium).